The chain runs to 89 residues: Large ribosomal subunit protein bL27 (89 aa).

Positions 1–22 are disordered; it reads MAHKKAGGSSRNGRDSAGRRLG.

This sequence belongs to the bacterial ribosomal protein bL27 family.

This is Large ribosomal subunit protein bL27 from Sphingopyxis alaskensis (strain DSM 13593 / LMG 18877 / RB2256) (Sphingomonas alaskensis).